A 215-amino-acid polypeptide reads, in one-letter code: S-crystallin 3 (215 aa).

In terms of domain architecture, GST N-terminal spans 2–80 (PSYTLHYFNH…YLAREFGYHG (79 aa)). The GST C-terminal domain maps to 82 to 215 (SNMEMARVDF…YLKKRCRTDF (134 aa)).

The protein belongs to the GST superfamily. In terms of tissue distribution, lens.

Functionally, S-crystallins are structural components of squids and octopi eye lens. Contains relatively little if any GST activity. In Enteroctopus dofleini (North Pacific giant octopus), this protein is S-crystallin 3.